We begin with the raw amino-acid sequence, 155 residues long: Archaemetzincin (155 aa).

Residue His109 participates in Zn(2+) binding. Glu110 (proton acceptor) is an active-site residue. The Zn(2+) site is built by His113, His119, Cys120, Cys125, Cys144, and Cys147.

The protein belongs to the peptidase M54 family. Monomer. Zn(2+) is required as a cofactor.

Its function is as follows. Probable zinc metalloprotease whose natural substrate is unknown. This chain is Archaemetzincin, found in Pyrobaculum aerophilum (strain ATCC 51768 / DSM 7523 / JCM 9630 / CIP 104966 / NBRC 100827 / IM2).